Reading from the N-terminus, the 182-residue chain is MWKLSRSRVLLDEPPEEEDVLRGAPPASAAAPASGASLRGWKEATSLFNKDDEEHLLETSRSPKSKGTNQRLREELKAEKKSGFWDALVLKQNAQPKKPDQIEGWEPPKLTAEDVVADHTEDDRSGCPPWSAWEDDTKGSTKYTSLANSASSSRWSLRSAGKLVSIRRQSKGHLTETCEEGE.

Disordered regions lie at residues 1 to 38 (MWKL…GASL), 52 to 73 (DEEH…QRLR), and 95 to 151 (QPKK…NSAS). Phosphoserine is present on Ser-7. Low complexity predominate over residues 22–37 (RGAPPASAAAPASGAS). Polar residues predominate over residues 59-70 (TSRSPKSKGTNQ). The span at 116–125 (VADHTEDDRS) shows a compositional bias: basic and acidic residues.

This sequence belongs to the TDRP family. In terms of assembly, interacts with PRM2. As to expression, strongly expressed in testis. Also detected at lower levels in epididymis, bone marrow and kidney.

Its subcellular location is the nucleus. It is found in the cytoplasm. Contributes to normal sperm motility, but not essential for male fertility. This chain is Testis development-related protein (Tdrp), found in Mus musculus (Mouse).